Here is a 72-residue protein sequence, read N- to C-terminus: Large ribosomal subunit protein bL31 (72 aa).

Zn(2+) contacts are provided by Cys16, Cys18, Cys36, and Cys39.

Belongs to the bacterial ribosomal protein bL31 family. Type A subfamily. Part of the 50S ribosomal subunit. It depends on Zn(2+) as a cofactor.

Functionally, binds the 23S rRNA. In Geobacter sp. (strain M21), this protein is Large ribosomal subunit protein bL31.